A 454-amino-acid polypeptide reads, in one-letter code: ABSCISIC ACID-INSENSITIVE 5-like protein 6 (454 aa).

Phosphoserine occurs at positions 32, 55, and 126. Thr-169 carries the phosphothreonine modification. One can recognise a bZIP domain in the interval 372-435; that stretch reads IERRQKRMIK…KNQLLEPLRQ (64 aa). The basic motif stretch occupies residues 374–393; the sequence is RRQKRMIKNRESAARSRARK. The segment at 400-414 is leucine-zipper; that stretch reads LEAEIAQLKELNEEL.

It belongs to the bZIP family. ABI5 subfamily. In terms of assembly, DNA-binding heterodimer. Interacts with ABI3 and the AFP proteins AFP1, AFP2, AFP3 and AFP4. Expressed in roots and flowers.

The protein localises to the nucleus. In terms of biological role, binds to the ABA-responsive element (ABRE). Mediates stress-responsive ABA signaling. The sequence is that of ABSCISIC ACID-INSENSITIVE 5-like protein 6 (ABF3) from Arabidopsis thaliana (Mouse-ear cress).